Reading from the N-terminus, the 395-residue chain is Proteinase-activated receptor 4 (395 aa).

The N-terminal stretch at 1–16 (MCWPLLYPLMLGFSIS) is a signal peptide. A propeptide spans 17–58 (PAECQTPSIYDDVESTREGQEASLRPTVELNESKSPDKPNPR) (removed for receptor activation). A disordered region spans residues 46-66 (LNESKSPDKPNPRGFPGKPCA). Residues 47-56 (NESKSPDKPN) show a composition bias toward basic and acidic residues. The Extracellular portion of the chain corresponds to 59-93 (GFPGKPCANNSDTLELPASSEALLLGWVPTRLVPA). N-linked (GlcNAc...) asparagine glycosylation is present at asparagine 67. The chain crosses the membrane as a helical span at residues 94-114 (IYGLVVVVGLPANGLALWVLA). Over 115 to 119 (TRVPR) the chain is Cytoplasmic. A helical transmembrane segment spans residues 120–140 (LPSTILLMNLAVADLLLALVL). Residues 141 to 161 (PPRLVYHLRGQRWPFGEAACR) lie on the Extracellular side of the membrane. Cysteines 160 and 239 form a disulfide. The chain crosses the membrane as a helical span at residues 162–182 (VATAALYGHMYGSVLLLAAVS). Residues 183–203 (LDRYLALVHSLRARALRGQRL) lie on the Cytoplasmic side of the membrane. Residues 204–224 (TTILCLVAWLSAATLVLPLTF) traverse the membrane as a helical segment. The Extracellular segment spans residues 225–254 (HRQTFLLAGSDRMLCHDALPLAEQTSHWRP). The chain crosses the membrane as a helical span at residues 255-275 (AFICLAVLGCFVPLLAMVLCY). The Cytoplasmic portion of the chain corresponds to 276 to 295 (GATLRALAANGQRYSHAVRL). Residues 296–316 (TALVLFSAVAAFTPSNVLLVL) traverse the membrane as a helical segment. At 317-330 (HYSNPSPEAWGNLY) the chain is on the extracellular side. A helical transmembrane segment spans residues 331–354 (GAYVPSLALSTLNSCVDPFIYYYV). The Cytoplasmic portion of the chain corresponds to 355 to 395 (SHEFREKVRAMLCRQLKASSSSQASREAGSRGTAICSSTLL).

The protein belongs to the G-protein coupled receptor 1 family. A proteolytic cleavage generates a new N-terminus that functions as a tethered ligand.

The protein localises to the cell membrane. Receptor for activated thrombin or trypsin coupled to G proteins that stimulate phosphoinositide hydrolysis. May play a role in platelets activation. This is Proteinase-activated receptor 4 (F2rl3) from Rattus norvegicus (Rat).